The sequence spans 199 residues: Recombination protein RecR (199 aa).

The C4-type zinc finger occupies 57–72 (CSICGNITEGDPCSIC). One can recognise a Toprim domain in the interval 80–176 (THVLVVEQPK…KVTRLAHGLS (97 aa)).

This sequence belongs to the RecR family.

In terms of biological role, may play a role in DNA repair. It seems to be involved in an RecBC-independent recombinational process of DNA repair. It may act with RecF and RecO. The sequence is that of Recombination protein RecR from Levilactobacillus brevis (strain ATCC 367 / BCRC 12310 / CIP 105137 / JCM 1170 / LMG 11437 / NCIMB 947 / NCTC 947) (Lactobacillus brevis).